The sequence spans 220 residues: Charged multivesicular body protein 2a (220 aa).

The stretch at 12–53 (EEMLRQNQRALNRAMRDLDRERQRLEQQEKKIIADIKKMAKQ) forms a coiled coil. The tract at residues 184-220 (ATGGSLSVAAGKKAEPQPTLADADADLEERLNNLRRD) is disordered. Positions 208-218 (ADLEERLNNLR) match the MIT-interacting motif motif. The segment covering 211 to 220 (EERLNNLRRD) has biased composition (basic and acidic residues).

Belongs to the SNF7 family. As to quaternary structure, probable core component of the endosomal sorting required for transport complex III (ESCRT-III). ESCRT-III components are thought to multimerize to form a flat lattice on the perimeter membrane of the endosome.

It is found in the late endosome membrane. The protein localises to the cytoplasm. Its function is as follows. Probable core component of the endosomal sorting required for transport complex III (ESCRT-III) which is involved in multivesicular bodies (MVBs) formation and sorting of endosomal cargo proteins into MVBs. MVBs contain intraluminal vesicles (ILVs) that are generated by invagination and scission from the limiting membrane of the endosome and mostly are delivered to lysosomes enabling degradation of membrane proteins, such as stimulated growth factor receptors, lysosomal enzymes and lipids. The protein is Charged multivesicular body protein 2a (chmp2a) of Danio rerio (Zebrafish).